Consider the following 813-residue polypeptide: Probable E3 ubiquitin-protein ligase hulA (813 aa).

Residues 1–109 (MGSNLPAQPN…QMGGDEMLTR (109 aa)) enclose the C2 domain. 2 disordered regions span residues 131–235 (NLST…GWER) and 251–351 (RTTT…YFVD). Over residues 148–167 (VQSSTSSGLVPQVAPSSSHP) the composition is skewed to polar residues. A compositionally biased stretch (low complexity) spans 188–215 (RVPSTTRPSSTAAPASAAGAAVSNSHGS). Residues 227–260 (GRLPAGWERREDNLGRTYYVDHNTRTTTWTRPSS) enclose the WW 1 domain. The span at 251 to 264 (RTTTWTRPSSNYNE) shows a compositional bias: polar residues. Residues 265–292 (HAQRSQREANMQLERRAHQSRMLPEDRT) are compositionally biased toward basic and acidic residues. Over residues 293–307 (GANSPNLPESSQQAH) the composition is skewed to polar residues. Low complexity predominate over residues 322–331 (ATGATTAGTG). WW domains are found at residues 331 to 364 (GELP…DPRR) and 391 to 424 (GPLP…DPRL). In terms of domain architecture, HECT spans 480–813 (SASDLKKRLM…VEETLGFGQE (334 aa)). The active-site Glycyl thioester intermediate is Cys-781.

It belongs to the RSP5/NEDD4 family. As to quaternary structure, interacts with creD.

It is found in the cytoplasm. The catalysed reaction is S-ubiquitinyl-[E2 ubiquitin-conjugating enzyme]-L-cysteine + [acceptor protein]-L-lysine = [E2 ubiquitin-conjugating enzyme]-L-cysteine + N(6)-ubiquitinyl-[acceptor protein]-L-lysine.. It functions in the pathway protein modification; protein ubiquitination. In terms of biological role, E3 ubiquitin-protein ligase which accepts ubiquitin from an E2 ubiquitin-conjugating enzyme in the form of a thioester and then directly transfers the ubiquitin to targeted substrates. Probably involved in the regulatory network controlling carbon source utilization. The polypeptide is Probable E3 ubiquitin-protein ligase hulA (hulA) (Aspergillus fumigatus (strain CBS 144.89 / FGSC A1163 / CEA10) (Neosartorya fumigata)).